The primary structure comprises 150 residues: Large ribosomal subunit protein bL9 (150 aa).

Belongs to the bacterial ribosomal protein bL9 family.

Its function is as follows. Binds to the 23S rRNA. The chain is Large ribosomal subunit protein bL9 from Cupriavidus taiwanensis (strain DSM 17343 / BCRC 17206 / CCUG 44338 / CIP 107171 / LMG 19424 / R1) (Ralstonia taiwanensis (strain LMG 19424)).